The chain runs to 611 residues: ANK repeat-containing protein nipk-1 (611 aa).

A coiled-coil region spans residues 91-149 (NSKSKKKTENQETKEKDEEAEEKKDGPPKDDKELKMKKEKEQEDENAELDEQKKDGDLL). 3 disordered regions span residues 92–167 (SKSK…SHPY), 212–255 (ISAS…DTSR), and 280–333 (TKEE…LSPR). Positions 97 to 131 (KTENQETKEKDEEAEEKKDGPPKDDKELKMKKEKE) are enriched in basic and acidic residues. Polar residues-rich tracts occupy residues 212–223 (ISASTTPDTVLS), 239–255 (ESLQ…DTSR), and 315–333 (GTCS…LSPR). ANK repeat units follow at residues 375–405 (DGDT…TMNE), 417–446 (FGET…SPNS), 452–482 (VGDS…RVNE), 486–527 (DGQT…DPTI), and 532–561 (TGKT…EDTF).

Belongs to the iASPP family. As to expression, expressed in the nervous system.

In terms of biological role, acts downstream of the receptor complex composed of ilcr-1 and ilcr-2, which is a signaling complex that modulates neuronal activity and animal behavior in response to sensory neuron input. Mediates signaling of the complex. In Caenorhabditis elegans, this protein is ANK repeat-containing protein nipk-1.